The chain runs to 92 residues: Small ribosomal subunit protein uS19c (92 aa).

The protein belongs to the universal ribosomal protein uS19 family.

The protein resides in the plastid. Its subcellular location is the chloroplast. Its function is as follows. Protein S19 forms a complex with S13 that binds strongly to the 16S ribosomal RNA. The sequence is that of Small ribosomal subunit protein uS19c from Lactuca sativa (Garden lettuce).